The primary structure comprises 194 residues: Alkyl hydroperoxide reductase AhpD (194 aa).

The active-site Proton donor is the C132. C132 and C135 are disulfide-bonded. Catalysis depends on C135, which acts as the Cysteine sulfenic acid (-SOH) intermediate.

It belongs to the AhpD family.

It catalyses the reaction N(6)-[(R)-dihydrolipoyl]-L-lysyl-[lipoyl-carrier protein] + a hydroperoxide = N(6)-[(R)-lipoyl]-L-lysyl-[lipoyl-carrier protein] + an alcohol + H2O. In terms of biological role, antioxidant protein with alkyl hydroperoxidase activity. Required for the reduction of the AhpC active site cysteine residues and for the regeneration of the AhpC enzyme activity. This is Alkyl hydroperoxide reductase AhpD from Koribacter versatilis (strain Ellin345).